The primary structure comprises 274 residues: Bis(5'-nucleosyl)-tetraphosphatase, symmetrical (274 aa).

This sequence belongs to the Ap4A hydrolase family.

It catalyses the reaction P(1),P(4)-bis(5'-adenosyl) tetraphosphate + H2O = 2 ADP + 2 H(+). Functionally, hydrolyzes diadenosine 5',5'''-P1,P4-tetraphosphate to yield ADP. In Shewanella sp. (strain W3-18-1), this protein is Bis(5'-nucleosyl)-tetraphosphatase, symmetrical.